A 216-amino-acid chain; its full sequence is 3,4-dihydroxy-2-butanone 4-phosphate synthase (216 aa).

D-ribulose 5-phosphate contacts are provided by residues 33–34 (RE), D38, 146–150 (RRGHT), and E170. E34 is a binding site for Mg(2+). H149 provides a ligand contact to Mg(2+).

Belongs to the DHBP synthase family. In terms of assembly, homodimer. Requires Mg(2+) as cofactor. It depends on Mn(2+) as a cofactor.

The enzyme catalyses D-ribulose 5-phosphate = (2S)-2-hydroxy-3-oxobutyl phosphate + formate + H(+). It participates in cofactor biosynthesis; riboflavin biosynthesis; 2-hydroxy-3-oxobutyl phosphate from D-ribulose 5-phosphate: step 1/1. Catalyzes the conversion of D-ribulose 5-phosphate to formate and 3,4-dihydroxy-2-butanone 4-phosphate. The sequence is that of 3,4-dihydroxy-2-butanone 4-phosphate synthase from Pseudomonas putida (strain ATCC 47054 / DSM 6125 / CFBP 8728 / NCIMB 11950 / KT2440).